Here is a 70-residue protein sequence, read N- to C-terminus: MLKIILIHIIKFYRKYISPLKKPCCRFYPTCSKYALDAINKYGAFKGSIMAIKRILRCHPFNPGGYDPVK.

This sequence belongs to the UPF0161 family.

The protein resides in the cell membrane. Could be involved in insertion of integral membrane proteins into the membrane. This chain is Putative membrane protein insertion efficiency factor, found in Clostridium novyi (strain NT).